The chain runs to 451 residues: tRNA-2-methylthio-N(6)-dimethylallyladenosine synthase (451 aa).

One can recognise an MTTase N-terminal domain in the interval 3–120 (LKLHIKTYGC…LPEMINHVRI (118 aa)). 6 residues coordinate [4Fe-4S] cluster: Cys-12, Cys-49, Cys-83, Cys-157, Cys-161, and Cys-164. One can recognise a Radical SAM core domain in the interval 143 to 375 (QAKGPTAFVS…QECIRKQAMK (233 aa)). The TRAM domain maps to 378–441 (QAMKGTVQCI…SNSLRGELIS (64 aa)).

This sequence belongs to the methylthiotransferase family. MiaB subfamily. In terms of assembly, monomer. It depends on [4Fe-4S] cluster as a cofactor.

It is found in the cytoplasm. The enzyme catalyses N(6)-dimethylallyladenosine(37) in tRNA + (sulfur carrier)-SH + AH2 + 2 S-adenosyl-L-methionine = 2-methylsulfanyl-N(6)-dimethylallyladenosine(37) in tRNA + (sulfur carrier)-H + 5'-deoxyadenosine + L-methionine + A + S-adenosyl-L-homocysteine + 2 H(+). Its function is as follows. Catalyzes the methylthiolation of N6-(dimethylallyl)adenosine (i(6)A), leading to the formation of 2-methylthio-N6-(dimethylallyl)adenosine (ms(2)i(6)A) at position 37 in tRNAs that read codons beginning with uridine. The chain is tRNA-2-methylthio-N(6)-dimethylallyladenosine synthase from Baumannia cicadellinicola subsp. Homalodisca coagulata.